The chain runs to 155 residues: Basic phospholipase A2 PC9 (155 aa).

Positions 1 to 21 (MYPAHLLVLLAVCVSLLGASA) are cleaved as a signal peptide. The propeptide occupies 22-27 (ISPRPL). 7 cysteine pairs are disulfide-bonded: C38–C98, C54–C144, C56–C72, C71–C125, C78–C118, C87–C111, and C105–C116. The Ca(2+) site is built by Y55, G57, and G59. H75 is an active-site residue. D76 contacts Ca(2+). Residue D119 is part of the active site.

Belongs to the phospholipase A2 family. Group I subfamily. D49 sub-subfamily. The cofactor is Ca(2+). As to expression, expressed by the venom gland.

It is found in the secreted. It carries out the reaction a 1,2-diacyl-sn-glycero-3-phosphocholine + H2O = a 1-acyl-sn-glycero-3-phosphocholine + a fatty acid + H(+). Functionally, snake venom phospholipase A2 (PLA2) that inhibits neuromuscular transmission by blocking acetylcholine release from the nerve termini. PLA2 catalyzes the calcium-dependent hydrolysis of the 2-acyl groups in 3-sn-phosphoglycerides. In Laticauda colubrina (Yellow-lipped sea krait), this protein is Basic phospholipase A2 PC9.